The chain runs to 77 residues: MNPIVEFCVNNLASGADAAFAKLDADDNLDVIEYDCLTYCDLCATSLFALVDGEVVRGETAEELVANIYTFLEENPF.

This sequence belongs to the UPF0349 family.

The chain is UPF0349 protein lmo2392 from Listeria monocytogenes serovar 1/2a (strain ATCC BAA-679 / EGD-e).